The primary structure comprises 92 residues: Small ribosomal subunit protein uS19 (92 aa).

This sequence belongs to the universal ribosomal protein uS19 family.

Protein S19 forms a complex with S13 that binds strongly to the 16S ribosomal RNA. The polypeptide is Small ribosomal subunit protein uS19 (Bacillus cereus (strain B4264)).